A 214-amino-acid chain; its full sequence is Ribonuclease HII (214 aa).

The RNase H type-2 domain maps to 27-214 (SVVAGIDEAG…SPIKQMCAIV (188 aa)). A divalent metal cation is bound by residues D33, E34, and D126.

It belongs to the RNase HII family. Mn(2+) is required as a cofactor. Requires Mg(2+) as cofactor.

The protein localises to the cytoplasm. The catalysed reaction is Endonucleolytic cleavage to 5'-phosphomonoester.. Its function is as follows. Endonuclease that specifically degrades the RNA of RNA-DNA hybrids. This is Ribonuclease HII (rnhB) from Chlamydia pneumoniae (Chlamydophila pneumoniae).